A 186-amino-acid polypeptide reads, in one-letter code: Probable calcium-binding protein CML25 (186 aa).

Residues 1 to 17 (MFNKNQGSNGGSSSNVG) are compositionally biased toward low complexity. Residues 1-23 (MFNKNQGSNGGSSSNVGIGADSP) form a disordered region. EF-hand domains are found at residues 33 to 68 (TEIRELEAVFKKFDVNGDGKISSKELGAIMTSLGHE), 69 to 104 (VPEEELEKAITEIDRKGDGYINFEEFVELNTKGMDQ), 106 to 141 (DVLENLKDAFSVYDIDGNGSISAEELHEVLRSLGDE), and 142 to 177 (CSIAECRKMIGGVDKDGDGTIDFEEFKIMMTMGSRR). The Ca(2+) site is built by aspartate 46, asparagine 48, aspartate 50, lysine 52, and glutamate 57. Ca(2+) contacts are provided by aspartate 119, aspartate 121, asparagine 123, serine 125, glutamate 130, aspartate 155, aspartate 157, aspartate 159, threonine 161, and glutamate 166.

In terms of biological role, potential calcium sensor. In Arabidopsis thaliana (Mouse-ear cress), this protein is Probable calcium-binding protein CML25 (CML25).